The sequence spans 150 residues: 3-dehydroquinate dehydratase (150 aa).

The active-site Proton acceptor is the Tyr23. Substrate is bound by residues Asn75, His81, and Asp88. His101 serves as the catalytic Proton donor. Substrate-binding positions include 102-103 (LS) and Arg112.

Belongs to the type-II 3-dehydroquinase family. In terms of assembly, homododecamer.

The catalysed reaction is 3-dehydroquinate = 3-dehydroshikimate + H2O. It participates in metabolic intermediate biosynthesis; chorismate biosynthesis; chorismate from D-erythrose 4-phosphate and phosphoenolpyruvate: step 3/7. Its function is as follows. Catalyzes a trans-dehydration via an enolate intermediate. This Pseudomonas savastanoi pv. phaseolicola (strain 1448A / Race 6) (Pseudomonas syringae pv. phaseolicola (strain 1448A / Race 6)) protein is 3-dehydroquinate dehydratase.